The sequence spans 381 residues: Lipid-A-disaccharide synthase (381 aa).

The protein belongs to the LpxB family.

It carries out the reaction a lipid X + a UDP-2-N,3-O-bis[(3R)-3-hydroxyacyl]-alpha-D-glucosamine = a lipid A disaccharide + UDP + H(+). It functions in the pathway bacterial outer membrane biogenesis; LPS lipid A biosynthesis. Functionally, condensation of UDP-2,3-diacylglucosamine and 2,3-diacylglucosamine-1-phosphate to form lipid A disaccharide, a precursor of lipid A, a phosphorylated glycolipid that anchors the lipopolysaccharide to the outer membrane of the cell. This is Lipid-A-disaccharide synthase from Rickettsia bellii (strain OSU 85-389).